The following is a 132-amino-acid chain: Small ribosomal subunit protein uS8 (132 aa).

It belongs to the universal ribosomal protein uS8 family. In terms of assembly, part of the 30S ribosomal subunit. Contacts proteins S5 and S12.

One of the primary rRNA binding proteins, it binds directly to 16S rRNA central domain where it helps coordinate assembly of the platform of the 30S subunit. The protein is Small ribosomal subunit protein uS8 of Lactococcus lactis subsp. lactis (strain IL1403) (Streptococcus lactis).